Here is a 424-residue protein sequence, read N- to C-terminus: UPF0229 protein Sde_0732 (424 aa).

The disordered stretch occupies residues 52-109; it reads IGIPSKDISEPVFHHDSGGVDTRVLPGNDQFHSGDRIQRPPSGQGGGGSGKGASDSGE. Basic and acidic residues predominate over residues 58-69; sequence DISEPVFHHDSG.

Belongs to the UPF0229 family.

In Saccharophagus degradans (strain 2-40 / ATCC 43961 / DSM 17024), this protein is UPF0229 protein Sde_0732.